We begin with the raw amino-acid sequence, 99 residues long: Protein AC150 (99 aa).

Residues 38-96 (GFSCYNKPIGVNFPHPTRCDAFYMCVGLNQKLELICPEGFEFDPDVKNCVPISDYGCTA) form the Chitin-binding type-2 domain. An intrachain disulfide couples cysteine 73 to cysteine 86.

Its subcellular location is the host nucleus. It is found in the virion. Its function is as follows. Plays a role in primary oral infection of the host. This Autographa californica nuclear polyhedrosis virus (AcMNPV) protein is Protein AC150.